A 102-amino-acid polypeptide reads, in one-letter code: Phosphoribosyl-ATP pyrophosphatase (102 aa).

This sequence belongs to the PRA-PH family.

Its subcellular location is the cytoplasm. It carries out the reaction 1-(5-phospho-beta-D-ribosyl)-ATP + H2O = 1-(5-phospho-beta-D-ribosyl)-5'-AMP + diphosphate + H(+). It participates in amino-acid biosynthesis; L-histidine biosynthesis; L-histidine from 5-phospho-alpha-D-ribose 1-diphosphate: step 2/9. The protein is Phosphoribosyl-ATP pyrophosphatase of Dinoroseobacter shibae (strain DSM 16493 / NCIMB 14021 / DFL 12).